Consider the following 793-residue polypeptide: Short transient receptor potential channel 1 (793 aa).

Residues 1–30 (MMAALYPSTDLSGASSSSLPSSPSSSSPNE) form a disordered region. The Cytoplasmic portion of the chain corresponds to 1–345 (MMAALYPSTD…FGQMSGYRRK (345 aa)). Low complexity predominate over residues 15–28 (SSSSLPSSPSSSSP). 4 ANK repeats span residues 46-75 (LNEK…SGDL), 83-109 (LGRN…YGCQ), 111-156 (ADAL…EYST), and 158-180 (MDVA…MLLK). Positions 189, 193, 195, and 198 each coordinate Zn(2+). The segment at residues 346–379 (PTCKKIMTVLTVGIFWPVLSLCYLIAPKSQFGRI) is an intramembrane region (discontinuously helical). Over 380–386 (IHTPFMK) the chain is Cytoplasmic. Residues 387-404 (FIIHGASYFTFLLLLNLY) traverse the membrane as a helical segment. Residues 405 to 422 (SLVYNEDKKNTMGPALER) lie on the Extracellular side of the membrane. A helical membrane pass occupies residues 423 to 439 (IDYLLILWIIGMIWSDI). Residues 440–455 (KRLWYEGLEDFLEESR) lie on the Cytoplasmic side of the membrane. The chain crosses the membrane as a helical span at residues 456 to 475 (NQLSFVMNSLYLATFALKVV). Over 476-496 (AHNKFHDFADRKDWDAFHPTL) the chain is Extracellular. A helical membrane pass occupies residues 497-517 (VAEGLFAFANVLSYLRLFFMY). The Cytoplasmic portion of the chain corresponds to 518–536 (TTSSILGPLQISMGQMLQD). A helical transmembrane segment spans residues 537–558 (FGKFLGMFLLVLFSFTIGLTQL). Topologically, residues 559 to 623 (YDKGYTSKEQ…GEELQSFVGA (65 aa)) are extracellular. The cysteines at positions 571 and 576 are disulfide-linked. The helical transmembrane segment at 624–644 (VIVGTYNVVVVIVLTKLLVAM) threads the bilayer. At 645 to 793 (LHKSFQLIAN…SKYAMFYPRN (149 aa)) the chain is on the cytoplasmic side.

This sequence belongs to the transient receptor (TC 1.A.4) family. STrpC subfamily. TRPC1 sub-subfamily. In terms of assembly, heterotetramer with TRPC4 and/or TRPC5. Forms a heteromeric ion channel with TRPC4, with a 1:3 TRPC1:TRPC4 stoichiometry. Unlike other TRP channel proteins, does not form a homomeric channel. Interacts with TRPC4AP. Interacts with ITPR3. Interacts with MX1 and RNF24. Interacts with FKBP4. Interacts with PLSCR1. Interacts with PKD2L2. Forms a heterotetramer with PKD2 with a 2:2 stoichiometry; has distinct channel properties separate from PKD2 or TRPC1 homomers alone. As to quaternary structure, interacts with isoform 2 of TRPC3. Activation of PRKCA induces phosphorylation of TRPC1 and subsequent Ca2+ entry into cells. Seems to be ubiquitous.

The protein localises to the cell membrane. The enzyme catalyses Ca(2+)(in) = Ca(2+)(out). It catalyses the reaction Na(+)(in) = Na(+)(out). It carries out the reaction Li(+)(in) = Li(+)(out). The catalysed reaction is Cs(+)(in) = Cs(+)(out). With respect to regulation, may be operated by a phosphatidylinositol second messenger system activated by receptor tyrosine kinases or G-protein coupled receptors. Also activated by intracellular calcium store depletion. Inhibited by xanthine-based inhibitor Pico145. Functionally, forms a receptor-activated non-selective calcium permeant cation channel. Forms a heteromeric ion channel with TRPC4 or TRPC5 that has reduced calcium permeability compared to the homomeric TRPC4 or TRPC5 channel. Also permeable to monovalent ions including sodium, lithium and cesium ions. Forms a receptor-activated non-selective calcium permeant cation channel. Also activated by intracellular calcium store depletion. The sequence is that of Short transient receptor potential channel 1 (TRPC1) from Homo sapiens (Human).